We begin with the raw amino-acid sequence, 455 residues long: Beta-1,3-galactosyl-O-glycosyl-glycoprotein beta-1,6-N-acetylglucosaminyltransferase 4 (455 aa).

Residues 1–13 are Cytoplasmic-facing; that stretch reads MKIFRCCFKYTLQ. Residues 14 to 34 form a helical; Signal-anchor for type II membrane protein membrane-spanning segment; sequence QKLFILLLTLWLFSLLKLLNV. The Lumenal portion of the chain corresponds to 35 to 455; it reads GRLLFPQRDI…TEGTRQSHTL (421 aa). Asn-73 is a glycosylation site (N-linked (GlcNAc...) asparagine). Intrachain disulfides connect Cys-74–Cys-228, Cys-162–Cys-383, Cys-183–Cys-210, and Cys-392–Cys-424. N-linked (GlcNAc...) asparagine glycans are attached at residues Asn-287 and Asn-382.

The protein belongs to the glycosyltransferase 14 family.

The protein localises to the golgi apparatus membrane. The enzyme catalyses a 3-O-[beta-D-galactosyl-(1-&gt;3)-N-acetyl-alpha-D-galactosaminyl]-L-seryl-[protein] + UDP-N-acetyl-alpha-D-glucosamine = 3-O-{beta-D-galactosyl-(1-&gt;3)-[N-acetyl-beta-D-glucosaminyl-(1-&gt;6)]-N-acetyl-alpha-D-galactosaminyl}-L-seryl-[protein] + UDP + H(+). The catalysed reaction is a 3-O-[beta-D-galactosyl-(1-&gt;3)-N-acetyl-alpha-D-galactosaminyl]-L-threonyl-[protein] + UDP-N-acetyl-alpha-D-glucosamine = a 3-O-{beta-D-galactosyl-(1-&gt;3)-[N-acetyl-beta-D-glucosaminyl-(1-&gt;6)]-N-acetyl-alpha-D-galactosaminyl}-L-threonyl-[protein] + UDP + H(+). The protein operates within protein modification; protein glycosylation. Its function is as follows. Glycosyltransferase that mediates core 2 O-glycan branching, an important step in mucin-type biosynthesis. Does not have core 4 O-glycan or I-branching enzyme activity. The sequence is that of Beta-1,3-galactosyl-O-glycosyl-glycoprotein beta-1,6-N-acetylglucosaminyltransferase 4 (Gcnt4) from Mus musculus (Mouse).